Here is a 716-residue protein sequence, read N- to C-terminus: Polyribonucleotide nucleotidyltransferase (716 aa).

2 residues coordinate Mg(2+): aspartate 485 and aspartate 491. Positions 552–611 constitute a KH domain; that stretch reads PKITTISVPKEKIRDVIGSGGKVIREIVEYSGAKVDIGDDGTVTIAASNDEQAQKAIARI. The region spanning 621–689 is the S1 motif domain; that stretch reads GRIYEGKVVK…DRGKVKLSMR (69 aa).

Belongs to the polyribonucleotide nucleotidyltransferase family. Mg(2+) serves as cofactor.

The protein resides in the cytoplasm. It catalyses the reaction RNA(n+1) + phosphate = RNA(n) + a ribonucleoside 5'-diphosphate. Involved in mRNA degradation. Catalyzes the phosphorolysis of single-stranded polyribonucleotides processively in the 3'- to 5'-direction. In Gluconobacter oxydans (strain 621H) (Gluconobacter suboxydans), this protein is Polyribonucleotide nucleotidyltransferase.